A 770-amino-acid polypeptide reads, in one-letter code: Molybdenum cofactor sulfurase (770 aa).

An N6-(pyridoxal phosphate)lysine modification is found at Lys231. Cys395 is a catalytic residue. An MOSC domain is found at 601–770 (DWVSRALGVS…TVSGVIEESE (170 aa)).

Belongs to the class-V pyridoxal-phosphate-dependent aminotransferase family. MOCOS subfamily. Pyridoxal 5'-phosphate is required as a cofactor.

The catalysed reaction is Mo-molybdopterin + L-cysteine + AH2 = thio-Mo-molybdopterin + L-alanine + A + H2O. In terms of biological role, sulfurates the molybdenum cofactor. Sulfation of molybdenum is essential for xanthine dehydrogenase (XDH) and aldehyde oxidase (ADO) enzymes in which molybdenum cofactor is liganded by 1 oxygen and 1 sulfur atom in active form. This Anopheles gambiae (African malaria mosquito) protein is Molybdenum cofactor sulfurase.